We begin with the raw amino-acid sequence, 237 residues long: Phosphatidylserine decarboxylase proenzyme (237 aa).

Ser206 serves as the catalytic Schiff-base intermediate with substrate; via pyruvic acid. Ser206 carries the pyruvic acid (Ser); by autocatalysis modification.

It belongs to the phosphatidylserine decarboxylase family. PSD-A subfamily. As to quaternary structure, heterodimer of a large membrane-associated beta subunit and a small pyruvoyl-containing alpha subunit. Pyruvate serves as cofactor. Post-translationally, is synthesized initially as an inactive proenzyme. Formation of the active enzyme involves a self-maturation process in which the active site pyruvoyl group is generated from an internal serine residue via an autocatalytic post-translational modification. Two non-identical subunits are generated from the proenzyme in this reaction, and the pyruvate is formed at the N-terminus of the alpha chain, which is derived from the carboxyl end of the proenzyme. The post-translation cleavage follows an unusual pathway, termed non-hydrolytic serinolysis, in which the side chain hydroxyl group of the serine supplies its oxygen atom to form the C-terminus of the beta chain, while the remainder of the serine residue undergoes an oxidative deamination to produce ammonia and the pyruvoyl prosthetic group on the alpha chain.

Its subcellular location is the cell membrane. The catalysed reaction is a 1,2-diacyl-sn-glycero-3-phospho-L-serine + H(+) = a 1,2-diacyl-sn-glycero-3-phosphoethanolamine + CO2. The protein operates within phospholipid metabolism; phosphatidylethanolamine biosynthesis; phosphatidylethanolamine from CDP-diacylglycerol: step 2/2. Its function is as follows. Catalyzes the formation of phosphatidylethanolamine (PtdEtn) from phosphatidylserine (PtdSer). This is Phosphatidylserine decarboxylase proenzyme from Rhodococcus jostii (strain RHA1).